The chain runs to 449 residues: UDP-N-acetylmuramoylalanine--D-glutamate ligase (449 aa).

An ATP-binding site is contributed by 119 to 125; the sequence is GSNGKTT.

It belongs to the MurCDEF family.

The protein localises to the cytoplasm. It catalyses the reaction UDP-N-acetyl-alpha-D-muramoyl-L-alanine + D-glutamate + ATP = UDP-N-acetyl-alpha-D-muramoyl-L-alanyl-D-glutamate + ADP + phosphate + H(+). Its pathway is cell wall biogenesis; peptidoglycan biosynthesis. In terms of biological role, cell wall formation. Catalyzes the addition of glutamate to the nucleotide precursor UDP-N-acetylmuramoyl-L-alanine (UMA). This is UDP-N-acetylmuramoylalanine--D-glutamate ligase from Streptococcus suis (strain 98HAH33).